Reading from the N-terminus, the 441-residue chain is Pre-mRNA-splicing factor PRP46 (441 aa).

Disordered stretches follow at residues 1 to 22 and 81 to 107; these read MPVA…NEPS and MGAS…LTNL. Polar residues predominate over residues 83–107; that stretch reads ASSSALTKHTPSASQPTTHDSLTNL. WD repeat units follow at residues 130-169, 172-211, 214-253, 256-295, 298-336, 339-379, and 388-427; these read GHQG…LRLT, GHIM…VVRH, GHLS…PVVV, GHKS…TMTT, HHKK…LVLN, DQNA…QSTQ, and ESEN…TAES.

Belongs to the WD repeat PRL1/PRL2 family. As to quaternary structure, associated with the spliceosome.

It localises to the cytoplasm. Its subcellular location is the nucleus. Involved in pre-mRNA splicing and required for cell cycle progression at G2/M. In Yarrowia lipolytica (strain CLIB 122 / E 150) (Yeast), this protein is Pre-mRNA-splicing factor PRP46 (PRP46).